The following is a 61-amino-acid chain: Conotoxin Vn5.3 (61 aa).

A signal peptide spans 1-19 (MHCLPVFVILLLLIASAPG). Residues 20–50 (VDVQPKTKNFMTRASLRDFAKKTPKRLSKLR) constitute a propeptide that is removed on maturation.

This sequence belongs to the conotoxin T superfamily. In terms of processing, contains 2 disulfide bonds that can be either 'C1-C3, C2-C4' or 'C1-C4, C2-C3', since these disulfide connectivities have been observed for conotoxins with cysteine framework V (for examples, see AC P0DQQ7 and AC P81755). Expressed by the venom duct.

The protein localises to the secreted. The sequence is that of Conotoxin Vn5.3 from Conus ventricosus (Mediterranean cone).